The chain runs to 501 residues: Dynein regulatory complex subunit 5 (501 aa).

A compositionally biased stretch (polar residues) spans 1-23 (MQETVTTSALLDPSHSSVSTQDK). 2 disordered regions span residues 1 to 56 (MQET…HPGA) and 203 to 222 (PAQL…EMEE). Low complexity predominate over residues 24 to 34 (SSTGGHTSSTG). The span at 35–49 (PQPSKPSITPVSAKS) shows a compositional bias: polar residues. LRR repeat units follow at residues 308-321 (VLEE…LIGD), 335-355 (RLRV…QSLA), 363-383 (NLIS…QALA), 391-411 (CLTT…TLLS), and 419-439 (TLTS…KQLL).

Belongs to the DRC5 family. Component of the nexin-dynein regulatory complex (N-DRC). Interacts with DRC1. Interacts with FBXL13/DRC6, DRC3 and DRC7.

It is found in the cell projection. The protein resides in the cilium. It localises to the flagellum. Its subcellular location is the cytoplasm. The protein localises to the cytoskeleton. It is found in the flagellum axoneme. In terms of biological role, component of the nexin-dynein regulatory complex (N-DRC) a key regulator of ciliary/flagellar motility which maintains the alignment and integrity of the distal axoneme and regulates microtubule sliding in motile axonemes. May play a role in the assembly of N-DRC. May be required for sperm motility. The chain is Dynein regulatory complex subunit 5 (TCTE1) from Macaca fascicularis (Crab-eating macaque).